Here is an 89-residue protein sequence, read N- to C-terminus: Small ribosomal subunit protein uS17 (89 aa).

The protein belongs to the universal ribosomal protein uS17 family. As to quaternary structure, part of the 30S ribosomal subunit.

In terms of biological role, one of the primary rRNA binding proteins, it binds specifically to the 5'-end of 16S ribosomal RNA. In Xylella fastidiosa (strain M12), this protein is Small ribosomal subunit protein uS17.